An 82-amino-acid chain; its full sequence is Cytochrome b559 subunit alpha (82 aa).

A helical transmembrane segment spans residues 22–36; sequence IIHAVALPAIFVAGF. A heme-binding site is contributed by His24.

This sequence belongs to the PsbE/PsbF family. Heterodimer of an alpha subunit and a beta subunit. PSII is composed of 1 copy each of membrane proteins PsbA, PsbB, PsbC, PsbD, PsbE, PsbF, PsbH, PsbI, PsbJ, PsbK, PsbL, PsbM, PsbT, PsbX, PsbY, Psb30/Ycf12, peripheral proteins PsbO, CyanoQ (PsbQ), PsbU, PsbV and a large number of cofactors. It forms dimeric complexes. It depends on heme b as a cofactor.

It localises to the cellular thylakoid membrane. In terms of biological role, this b-type cytochrome is tightly associated with the reaction center of photosystem II (PSII). PSII is a light-driven water:plastoquinone oxidoreductase that uses light energy to abstract electrons from H(2)O, generating O(2) and a proton gradient subsequently used for ATP formation. It consists of a core antenna complex that captures photons, and an electron transfer chain that converts photonic excitation into a charge separation. This is Cytochrome b559 subunit alpha from Prochlorococcus marinus (strain NATL1A).